The following is a 1327-amino-acid chain: MELYESTYFIVLIPSVVITVIFLFFWLFMKETLYDEVLAKQKREQKLISTKTDKKKAEKKKNKKKEIQNGTLRESDSEHVPRDFKLSDASPAEDEQFVPAPLNVAETSSSVRERQKKEKKQKPSLEEQVIKESDASKIPGKKVEPVLVTKQPAPPPPLEAAALKKKAGQKKSKNGSEEQDKKVEMLMAPSKEQDVLLSHQDTKQEGGLGKKKGLSKKQKSENVAVLVDEPLIHATTYMPLDNANSNLMMDKREIIDMIKPDHVEGIQKSGTKKLKIETDKENAEVKFKDFLLSLKTMMFSEDEALCVVDLLKEKSGVIKEALKKSNKGELSGLLHQLQEKERLLSAMKEDAAASKERCKRLTQEMMTEKERSSVVIARMKDRIGTLEKEHNIFQNKMHASYQETQQMQMKFQQVQEQMEAEIAHLKQENGILRDAVSNTTNQLESKQSAELNKLRQDCGRLVSELNEKTGKLQQEGVQKKNAEQAATQLKVQLQEAERRWEEVQSYIRKRTAEHEAAQQDLQSKFVAKENEVQSLHSKLTDTLVSKQQLEQRLMQLMESEQKRASKEESLQIQVQDILEQNEALKAQIQQFHSQIAAQTSASVLAEELHKVIAEKDKQLKQTEDSLANEQDHLASKEEELKDVQNMNFLLKAEVQKWQALANEQAATAHEVEKMQKSIHVKEDEIRLLEEQLQHEVASKMEELKILSEQNKALQSEVRKLQTAVSQQPNKDVVEQMEKCIQEKDEKLRTVEELLETGLIQVATREEELSAIRTENSTLTREVQELKAKQSDQVSFVSLIEDLKRVIHEKDGQIKSVEELLEVELLKVANKEKTVQALKQEIEVLKEEIGNAQLEKAHQLSVTSQVQELQNLLRGKEEQVNSMKAALEDRDRGLTGRGTCAQVCSTPQFEELESVLKEKDNEIKRIEVKLKDTESDVSKMSELLKEVQEENKFLKCQLSHQKHQQASFPSQEELQTVISEKEKEITDLCNELESLKNAVEHQRKKNNDLREKNWEAMEALASTEKMLQDRVNKTSKERRQHVEAIELESKDLLKRLFPTVSVPSNLNYSEWLRGFEKKAKACVAGTSDAEAVKVLEHRLKEASEMHTLLQLECEKYKSVLAETEGILQKLQRSVEQEESKWKIKADESQRMIKQMQSSFTASERELERLRQENKDMENLRREREHLEMELEKAEMERSTYVMEVRELKDLLTELQKKLDDSYSEAVRQNEELNLLKTQLNETHSKLQNEQTERKKVADDLHKAQQSLNSIHSKISLKAAGDTVVIENSDISPEMESPEKETMSVSLNQTVTQLQQLLQEVNQQLTKET.

The Cytoplasmic portion of the chain corresponds to 1 to 8; the sequence is MELYESTY. Residues 9–29 traverse the membrane as a helical; Signal-anchor for type II membrane protein segment; that stretch reads FIVLIPSVVITVIFLFFWLFM. The Lumenal segment spans residues 30-1327; it reads KETLYDEVLA…EVNQQLTKET (1298 aa). 2 disordered regions span residues 49–181 and 197–216; these read STKT…EQDK and LSHQDTKQEGGLGKKKGLSK. The N-linked (GlcNAc...) asparagine glycan is linked to N69. Composition is skewed to basic and acidic residues over residues 73 to 86 and 111 to 135; these read RESDSEHVPRDFKL and VRERQKKEKKQKPSLEEQVIKESDA. Phosphoserine occurs at positions 75 and 77. A compositionally biased stretch (basic residues) spans 163-173; the sequence is LKKKAGQKKSK. A coiled-coil region spans residues 329–1327; sequence ELSGLLHQLQ…EVNQQLTKET (999 aa). N-linked (GlcNAc...) asparagine glycosylation occurs at N1031. The residue at position 1060 (S1060) is a Phosphoserine. N1066 is a glycosylation site (N-linked (GlcNAc...) asparagine). S1290 is subject to Phosphoserine.

The protein belongs to the kinectin family. In terms of tissue distribution, expressed in all tissues examined including 12-day embryo, adult heart, brain, ovary, kidney, lung, small intestine, spleen, thymus and pancreas.

It localises to the endoplasmic reticulum membrane. Its function is as follows. Receptor for kinesin thus involved in kinesin-driven vesicle motility. Accumulates in integrin-based adhesion complexes (IAC) upon integrin aggregation by fibronectin. In Mus musculus (Mouse), this protein is Kinectin.